The sequence spans 1399 residues: DNA-directed RNA polymerase subunit beta' (1399 aa).

Cysteine 71, cysteine 73, cysteine 86, and cysteine 89 together coordinate Zn(2+). Mg(2+) is bound by residues aspartate 462, aspartate 464, and aspartate 466. Zn(2+) is bound by residues cysteine 810, cysteine 884, cysteine 891, and cysteine 894.

The protein belongs to the RNA polymerase beta' chain family. The RNAP catalytic core consists of 2 alpha, 1 beta, 1 beta' and 1 omega subunit. When a sigma factor is associated with the core the holoenzyme is formed, which can initiate transcription. It depends on Mg(2+) as a cofactor. Requires Zn(2+) as cofactor.

It carries out the reaction RNA(n) + a ribonucleoside 5'-triphosphate = RNA(n+1) + diphosphate. DNA-dependent RNA polymerase catalyzes the transcription of DNA into RNA using the four ribonucleoside triphosphates as substrates. The polypeptide is DNA-directed RNA polymerase subunit beta' (Nitrobacter winogradskyi (strain ATCC 25391 / DSM 10237 / CIP 104748 / NCIMB 11846 / Nb-255)).